The primary structure comprises 511 residues: 2,3-bisphosphoglycerate-independent phosphoglycerate mutase (511 aa).

A Mn(2+)-binding site is contributed by aspartate 12. Tyrosine 36 bears the Phosphotyrosine mark. Mn(2+) is bound at residue serine 62. Serine 62 functions as the Phosphoserine intermediate in the catalytic mechanism. Substrate is bound by residues histidine 123, 153–154 (RD), arginine 185, arginine 191, 261–264 (RPDR), and lysine 336. Mn(2+) is bound by residues aspartate 403, histidine 407, aspartate 444, histidine 445, and histidine 462.

Belongs to the BPG-independent phosphoglycerate mutase family. Monomer. Mn(2+) is required as a cofactor.

It carries out the reaction (2R)-2-phosphoglycerate = (2R)-3-phosphoglycerate. It functions in the pathway carbohydrate degradation; glycolysis; pyruvate from D-glyceraldehyde 3-phosphate: step 3/5. With respect to regulation, could be inhibited during sporulation by acidification of the forespore, thus allowing accumulation of the spore's large depot of 3-phosphoglyceric acid. In terms of biological role, essential for rapid growth and for sporulation. Catalyzes the interconversion of 2-phosphoglycerate (2-PGA) and 3-phosphoglycerate (3-PGA). The protein is 2,3-bisphosphoglycerate-independent phosphoglycerate mutase of Geobacillus stearothermophilus (Bacillus stearothermophilus).